The following is a 284-amino-acid chain: Efem/EfeO family lipoprotein (284 aa).

A signal peptide spans 1–17 (MKKLTTLLLASTLLIAA). Cys-18 is lipidated: N-palmitoyl cysteine. Cys-18 carries the S-diacylglycerol cysteine lipid modification.

It belongs to the EfeM/EfeO family.

The protein resides in the cell membrane. The polypeptide is Efem/EfeO family lipoprotein (Staphylococcus aureus (strain NCTC 8325 / PS 47)).